Reading from the N-terminus, the 316-residue chain is 4-hydroxy-3-methylbut-2-enyl diphosphate reductase (316 aa).

Cys-12 lines the [4Fe-4S] cluster pocket. (2E)-4-hydroxy-3-methylbut-2-enyl diphosphate-binding residues include His-41 and His-74. Positions 41 and 74 each coordinate dimethylallyl diphosphate. The isopentenyl diphosphate site is built by His-41 and His-74. Cys-96 is a [4Fe-4S] cluster binding site. A (2E)-4-hydroxy-3-methylbut-2-enyl diphosphate-binding site is contributed by His-124. Position 124 (His-124) interacts with dimethylallyl diphosphate. Residue His-124 coordinates isopentenyl diphosphate. The active-site Proton donor is the Glu-126. Thr-169 serves as a coordination point for (2E)-4-hydroxy-3-methylbut-2-enyl diphosphate. Cys-199 contacts [4Fe-4S] cluster. Residues Ser-227, Ser-228, Asn-229, and Ser-271 each contribute to the (2E)-4-hydroxy-3-methylbut-2-enyl diphosphate site. Residues Ser-227, Ser-228, Asn-229, and Ser-271 each contribute to the dimethylallyl diphosphate site. Residues Ser-227, Ser-228, Asn-229, and Ser-271 each contribute to the isopentenyl diphosphate site.

It belongs to the IspH family. [4Fe-4S] cluster is required as a cofactor.

The enzyme catalyses isopentenyl diphosphate + 2 oxidized [2Fe-2S]-[ferredoxin] + H2O = (2E)-4-hydroxy-3-methylbut-2-enyl diphosphate + 2 reduced [2Fe-2S]-[ferredoxin] + 2 H(+). It catalyses the reaction dimethylallyl diphosphate + 2 oxidized [2Fe-2S]-[ferredoxin] + H2O = (2E)-4-hydroxy-3-methylbut-2-enyl diphosphate + 2 reduced [2Fe-2S]-[ferredoxin] + 2 H(+). It functions in the pathway isoprenoid biosynthesis; dimethylallyl diphosphate biosynthesis; dimethylallyl diphosphate from (2E)-4-hydroxy-3-methylbutenyl diphosphate: step 1/1. It participates in isoprenoid biosynthesis; isopentenyl diphosphate biosynthesis via DXP pathway; isopentenyl diphosphate from 1-deoxy-D-xylulose 5-phosphate: step 6/6. Its function is as follows. Catalyzes the conversion of 1-hydroxy-2-methyl-2-(E)-butenyl 4-diphosphate (HMBPP) into a mixture of isopentenyl diphosphate (IPP) and dimethylallyl diphosphate (DMAPP). Acts in the terminal step of the DOXP/MEP pathway for isoprenoid precursor biosynthesis. The chain is 4-hydroxy-3-methylbut-2-enyl diphosphate reductase from Vibrio cholerae serotype O1 (strain ATCC 39315 / El Tor Inaba N16961).